Reading from the N-terminus, the 130-residue chain is RutC family protein HI_0719 (130 aa).

The active site involves Cys109.

The protein belongs to the RutC family. As to quaternary structure, homotrimer.

This chain is RutC family protein HI_0719, found in Haemophilus influenzae (strain ATCC 51907 / DSM 11121 / KW20 / Rd).